Here is an 833-residue protein sequence, read N- to C-terminus: cGMP-specific 3',5'-cyclic phosphodiesterase (833 aa).

S60 bears the Phosphoserine mark. The disordered stretch occupies residues 82-101 (FLSDSGKKEQMPLTSPRFDS). 2 GAF domains span residues 122–272 (DVTA…GIVL) and 304–461 (SLEV…GLGI). In terms of domain architecture, PDEase spans 494-818 (ETRELQALAA…QKWQALADQQ (325 aa)). H571 functions as the Proton donor in the catalytic mechanism. Residues H575, H611, D612, and D722 each contribute to the Zn(2+) site. Residue D612 participates in Mg(2+) binding. Position 775 (Q775) interacts with 3',5'-cyclic GMP.

This sequence belongs to the cyclic nucleotide phosphodiesterase family. Requires Zn(2+) as cofactor. The cofactor is Mg(2+). Phosphorylation is regulated by binding of cGMP to the two allosteric sites. Phosphorylation by PRKG1 leads to its activation.

It carries out the reaction 3',5'-cyclic GMP + H2O = GMP + H(+). It participates in purine metabolism; 3',5'-cyclic GMP degradation; GMP from 3',5'-cyclic GMP: step 1/1. Plays a role in signal transduction by regulating the intracellular concentration of cyclic nucleotides. This phosphodiesterase catalyzes the specific hydrolysis of cGMP to 5'-GMP. Specifically regulates nitric-oxide-generated cGMP. In Rattus norvegicus (Rat), this protein is cGMP-specific 3',5'-cyclic phosphodiesterase (Pde5a).